The sequence spans 203 residues: Elongation factor Ts (203 aa).

The tract at residues 80–83 is involved in Mg(2+) ion dislocation from EF-Tu; that stretch reads TDFV.

Belongs to the EF-Ts family.

Its subcellular location is the cytoplasm. In terms of biological role, associates with the EF-Tu.GDP complex and induces the exchange of GDP to GTP. It remains bound to the aminoacyl-tRNA.EF-Tu.GTP complex up to the GTP hydrolysis stage on the ribosome. This is Elongation factor Ts from Moorella thermoacetica (strain ATCC 39073 / JCM 9320).